Consider the following 526-residue polypeptide: ATP synthase subunit alpha (526 aa).

ATP is bound at residue 171 to 178 (GDRQTGKT).

It belongs to the ATPase alpha/beta chains family. F-type ATPases have 2 components, CF(1) - the catalytic core - and CF(0) - the membrane proton channel. CF(1) has five subunits: alpha(3), beta(3), gamma(1), delta(1), epsilon(1). CF(0) has four main subunits: a(1), b(1), b'(1) and c(9-12).

It localises to the cell inner membrane. The enzyme catalyses ATP + H2O + 4 H(+)(in) = ADP + phosphate + 5 H(+)(out). Produces ATP from ADP in the presence of a proton gradient across the membrane. The alpha chain is a regulatory subunit. This chain is ATP synthase subunit alpha, found in Chlorobium phaeobacteroides (strain DSM 266 / SMG 266 / 2430).